The sequence spans 443 residues: Tubulin beta-3 chain (443 aa).

GTP is bound by residues Gln11, Glu69, Ser138, Gly142, Thr143, Gly144, Asn204, and Asn226. Mg(2+) is bound at residue Glu69.

The protein belongs to the tubulin family. In terms of assembly, dimer of alpha and beta chains. A typical microtubule is a hollow water-filled tube with an outer diameter of 25 nm and an inner diameter of 15 nM. Alpha-beta heterodimers associate head-to-tail to form protofilaments running lengthwise along the microtubule wall with the beta-tubulin subunit facing the microtubule plus end conferring a structural polarity. Microtubules usually have 13 protofilaments but different protofilament numbers can be found in some organisms and specialized cells. Mg(2+) is required as a cofactor.

The protein resides in the cytoplasm. Its subcellular location is the cytoskeleton. In terms of biological role, tubulin is the major constituent of microtubules, a cylinder consisting of laterally associated linear protofilaments composed of alpha- and beta-tubulin heterodimers. Microtubules grow by the addition of GTP-tubulin dimers to the microtubule end, where a stabilizing cap forms. Below the cap, tubulin dimers are in GDP-bound state, owing to GTPase activity of alpha-tubulin. In Echinococcus multilocularis (Fox tapeworm), this protein is Tubulin beta-3 chain (TUB-3).